The following is a 364-amino-acid chain: tRNA 2-selenouridine synthase (364 aa).

A Rhodanese domain is found at 14–137 (LIADTPIIDV…LRQTAIQATI (124 aa)). The active-site S-selanylcysteine intermediate is C97.

This sequence belongs to the SelU family. As to quaternary structure, monomer.

The enzyme catalyses 5-methylaminomethyl-2-thiouridine(34) in tRNA + selenophosphate + (2E)-geranyl diphosphate + H2O + H(+) = 5-methylaminomethyl-2-selenouridine(34) in tRNA + (2E)-thiogeraniol + phosphate + diphosphate. The catalysed reaction is 5-methylaminomethyl-2-thiouridine(34) in tRNA + (2E)-geranyl diphosphate = 5-methylaminomethyl-S-(2E)-geranyl-thiouridine(34) in tRNA + diphosphate. It carries out the reaction 5-methylaminomethyl-S-(2E)-geranyl-thiouridine(34) in tRNA + selenophosphate + H(+) = 5-methylaminomethyl-2-(Se-phospho)selenouridine(34) in tRNA + (2E)-thiogeraniol. It catalyses the reaction 5-methylaminomethyl-2-(Se-phospho)selenouridine(34) in tRNA + H2O = 5-methylaminomethyl-2-selenouridine(34) in tRNA + phosphate. Functionally, involved in the post-transcriptional modification of the uridine at the wobble position (U34) of tRNA(Lys), tRNA(Glu) and tRNA(Gln). Catalyzes the conversion of 2-thiouridine (S2U-RNA) to 2-selenouridine (Se2U-RNA). Acts in a two-step process involving geranylation of 2-thiouridine (S2U) to S-geranyl-2-thiouridine (geS2U) and subsequent selenation of the latter derivative to 2-selenouridine (Se2U) in the tRNA chain. This is tRNA 2-selenouridine synthase from Escherichia coli O81 (strain ED1a).